The primary structure comprises 183 residues: Glutathione-regulated potassium-efflux system ancillary protein KefG (183 aa).

It belongs to the NAD(P)H dehydrogenase (quinone) family. KefG subfamily. As to quaternary structure, interacts with KefB.

The protein resides in the cell inner membrane. The enzyme catalyses a quinone + NADH + H(+) = a quinol + NAD(+). The catalysed reaction is a quinone + NADPH + H(+) = a quinol + NADP(+). Regulatory subunit of a potassium efflux system that confers protection against electrophiles. Required for full activity of KefB. The protein is Glutathione-regulated potassium-efflux system ancillary protein KefG of Serratia proteamaculans (strain 568).